The following is a 254-amino-acid chain: 5-oxoprolinase subunit A (254 aa).

The protein belongs to the LamB/PxpA family. Forms a complex composed of PxpA, PxpB and PxpC.

It catalyses the reaction 5-oxo-L-proline + ATP + 2 H2O = L-glutamate + ADP + phosphate + H(+). Functionally, catalyzes the cleavage of 5-oxoproline to form L-glutamate coupled to the hydrolysis of ATP to ADP and inorganic phosphate. This is 5-oxoprolinase subunit A from Acinetobacter baumannii (strain ACICU).